We begin with the raw amino-acid sequence, 314 residues long: Mitochondrial 2-oxoglutarate/malate carrier protein (314 aa).

Alanine 2 carries the N-acetylalanine modification. The residue at position 6 (serine 6) is a Phosphoserine. Solcar repeat units lie at residues 23-108, 117-208, and 217-306; these read VKFL…LFER, PGFL…SKQF, and DNIL…MNKA. Residues 24 to 42 traverse the membrane as a helical segment; it reads KFLFGGLAGMGATVFVQPL. The residue at position 57 (lysine 57) is an N6-succinyllysine. The residue at position 73 (lysine 73) is an N6-acetyllysine. Residues 83–101 traverse the membrane as a helical segment; sequence GLSAGLLRQATYTTTRLGI. At tyrosine 102 the chain carries Phosphotyrosine. A run of 3 helical transmembrane segments spans residues 119 to 140, 183 to 202, and 222 to 240; these read FLLK…GTPA, GCIP…LASY, and HFCA…SMPV. Lysine 256 bears the N6-acetyllysine mark. The helical transmembrane segment at 281 to 300 threads the bilayer; the sequence is GFTPYYARLGPHTVLTFIFL.

Belongs to the mitochondrial carrier (TC 2.A.29) family. Interacts with SMIM26.

The protein resides in the mitochondrion inner membrane. The catalysed reaction is (S)-malate(in) + 2-oxoglutarate(out) = (S)-malate(out) + 2-oxoglutarate(in). It catalyses the reaction malonate(in) + 2-oxoglutarate(out) = malonate(out) + 2-oxoglutarate(in). It carries out the reaction succinate(in) + 2-oxoglutarate(out) = succinate(out) + 2-oxoglutarate(in). The enzyme catalyses maleate(in) + 2-oxoglutarate(out) = maleate(out) + 2-oxoglutarate(in). The catalysed reaction is oxaloacetate(in) + 2-oxoglutarate(out) = oxaloacetate(out) + 2-oxoglutarate(in). In terms of biological role, catalyzes the transport of 2-oxoglutarate (alpha-oxoglutarate) across the inner mitochondrial membrane in an electroneutral exchange for malate. Can also exchange 2-oxoglutarate for other dicarboxylic acids such as malonate, succinate, maleate and oxaloacetate, although with lower affinity. Contributes to several metabolic processes, including the malate-aspartate shuttle, the oxoglutarate/isocitrate shuttle, in gluconeogenesis from lactate, and in nitrogen metabolism. Maintains mitochondrial fusion and fission events, and the organization and morphology of cristae. Involved in the regulation of apoptosis. Helps protect from cytotoxic-induced apoptosis by modulating glutathione levels in mitochondria. The chain is Mitochondrial 2-oxoglutarate/malate carrier protein (Slc25a11) from Mus musculus (Mouse).